The chain runs to 379 residues: Gap junction alpha-1 protein (379 aa).

Residues 2–23 (GDWSALGRLLDKVQAYSTAGGK) lie on the Cytoplasmic side of the membrane. A helical membrane pass occupies residues 24–44 (VWLSVLFIFRILLLGTAVESA). Over 45 to 76 (WGDEQSAFVCNTQQPGCENVCYDKSFPISHVR) the chain is Extracellular. Cystine bridges form between C54-C192 and C187-C198. Residues 77–97 (FWVLQIIFVSTPTLLYLAHVF) traverse the membrane as a helical segment. At 98–163 (YLMRKEEKLN…TYIISILFKS (66 aa)) the chain is on the cytoplasmic side. The helical transmembrane segment at 164–184 (VFEVGFIIIQWYMYGFSLSAI) threads the bilayer. Over 185–207 (YTCKRDPCPHQVDCFLSRPTEKT) the chain is Extracellular. The chain crosses the membrane as a helical span at residues 208–228 (IFIWFMLIVSIVSLALNIIEL). The Cytoplasmic portion of the chain corresponds to 229–379 (FYVTYKSIKD…SRPRPDDLEI (151 aa)). Positions 322-379 (STISNTHAQPFDFSDEHQNTKKMAPGHEMQPLTILDQRPSSRASSHASSRPRPDDLEI) are disordered. Positions 359–371 (RPSSRASSHASSR) are enriched in low complexity.

The protein belongs to the connexin family. Alpha-type (group II) subfamily. As to quaternary structure, a connexon is composed of a hexamer of connexins. Interacts with TMEM65. Expressed in most tissues. Highest levels found in eye and brain.

The protein resides in the cell membrane. It is found in the cell junction. Its subcellular location is the gap junction. One gap junction consists of a cluster of closely packed pairs of transmembrane channels, the connexons, through which materials of low MW diffuse from one cell to a neighboring cell. Plays an essential role in gap junction communication in the ventricles. This chain is Gap junction alpha-1 protein (gja1), found in Xenopus laevis (African clawed frog).